A 528-amino-acid polypeptide reads, in one-letter code: uncharacterized protein (528 aa).

6–35 is an FAD binding site; that stretch reads DYVVVGTGSAGAVVASRLSTDPATTVVALE. The Proton acceptor role is filled by His468.

The protein belongs to the GMC oxidoreductase family. The cofactor is FAD.

This is an uncharacterized protein from Mycobacterium bovis (strain ATCC BAA-935 / AF2122/97).